The chain runs to 307 residues: Aspartate carbamoyltransferase catalytic subunit (307 aa).

The carbamoyl phosphate site is built by R55 and T56. Residue K85 participates in L-aspartate binding. Positions 106, 135, and 138 each coordinate carbamoyl phosphate. Residues R168 and R230 each contribute to the L-aspartate site. Carbamoyl phosphate is bound by residues L268 and P269.

It belongs to the aspartate/ornithine carbamoyltransferase superfamily. ATCase family. Heterododecamer (2C3:3R2) of six catalytic PyrB chains organized as two trimers (C3), and six regulatory PyrI chains organized as three dimers (R2).

It carries out the reaction carbamoyl phosphate + L-aspartate = N-carbamoyl-L-aspartate + phosphate + H(+). It functions in the pathway pyrimidine metabolism; UMP biosynthesis via de novo pathway; (S)-dihydroorotate from bicarbonate: step 2/3. Functionally, catalyzes the condensation of carbamoyl phosphate and aspartate to form carbamoyl aspartate and inorganic phosphate, the committed step in the de novo pyrimidine nucleotide biosynthesis pathway. In Photorhabdus laumondii subsp. laumondii (strain DSM 15139 / CIP 105565 / TT01) (Photorhabdus luminescens subsp. laumondii), this protein is Aspartate carbamoyltransferase catalytic subunit.